The following is a 403-amino-acid chain: Phosphopentomutase (403 aa).

Asp-13, Asp-298, His-303, Asp-339, His-340, and His-351 together coordinate Mn(2+).

This sequence belongs to the phosphopentomutase family. Requires Mn(2+) as cofactor.

The protein resides in the cytoplasm. It catalyses the reaction 2-deoxy-alpha-D-ribose 1-phosphate = 2-deoxy-D-ribose 5-phosphate. The catalysed reaction is alpha-D-ribose 1-phosphate = D-ribose 5-phosphate. It functions in the pathway carbohydrate degradation; 2-deoxy-D-ribose 1-phosphate degradation; D-glyceraldehyde 3-phosphate and acetaldehyde from 2-deoxy-alpha-D-ribose 1-phosphate: step 1/2. Its function is as follows. Isomerase that catalyzes the conversion of deoxy-ribose 1-phosphate (dRib-1-P) and ribose 1-phosphate (Rib-1-P) to deoxy-ribose 5-phosphate (dRib-5-P) and ribose 5-phosphate (Rib-5-P), respectively. This Streptococcus thermophilus (strain ATCC BAA-250 / LMG 18311) protein is Phosphopentomutase.